We begin with the raw amino-acid sequence, 279 residues long: Tryptophan synthase alpha chain (279 aa).

Residues Glu-50 and Asp-61 each act as proton acceptor in the active site.

The protein belongs to the TrpA family. As to quaternary structure, tetramer of two alpha and two beta chains.

The catalysed reaction is (1S,2R)-1-C-(indol-3-yl)glycerol 3-phosphate + L-serine = D-glyceraldehyde 3-phosphate + L-tryptophan + H2O. It participates in amino-acid biosynthesis; L-tryptophan biosynthesis; L-tryptophan from chorismate: step 5/5. In terms of biological role, the alpha subunit is responsible for the aldol cleavage of indoleglycerol phosphate to indole and glyceraldehyde 3-phosphate. The chain is Tryptophan synthase alpha chain from Rhizobium johnstonii (strain DSM 114642 / LMG 32736 / 3841) (Rhizobium leguminosarum bv. viciae).